The primary structure comprises 1153 residues: MDEEQMWKGFFFKLQELKMNPPTEHEHQLQDGDDGFFEKFGSLLRQKSQIDEGVLKSSLAPLEENGSGGEEDSDESPDGTLQLSQDSECTSIDTFATESTLASSSDKDISTSVLDSAPVMNVTDLYEEILFEIFNNIGCENNEECTNSLVEFVQDAFKIPNATHEEIYEAARLKEPPNVRLNVEIIKAENLMSKDSNGLSDPFVTLYLESNGSHRYNSSVKPATLNPIWEEHFSLPITENARDEVLIVEVWDFDAAETVKEKVNKILDVKGVKGLSKLMKEIAVTASSGKHDNELIGRAAITLKSIPVSGLTVWYNLEKGSKGRSRGSLLVNLALSAEKNKSVAVQEHKNLLKLLLMYELETSQVANYWWSGKFSPNAELIRSQHAAQSGLTPFDCALSQWHAYSTIHETHKLNFTLFNSILDVVVPVITYMQNDSEDVKTFWDGVKRLLPSCFAVLRKLRSKNTSDKNIIRALNEVLDILKKIKELEVPESVDIFPKSVYGWLHTNDTDETCNIDTAIEDAINTGTREWLEHIVEGSRQSKNTETDDEKLQYVIKLIQMVRSDLQRAMEYFDKIFYHKIQLNYSAVLYLFYDSKLAEICKSIIIEVCNNIKRLDVPDDQFEYLPNLENVNMGTTLFEVYLILKRYVQLGESLCSEPLELSNFYPWFERGVTHWLDISIIKALSRIQKAIDLDQLKAVDETVKYSSSAVDTLSIFYQIKIFWQQLDWPEVEGSYIFVAKIVNDLCRCCIFYAQQMSRRVENIFIADDNNKNFILSEEWCIAINNMDYIRQSLPSFIKELSIDDIIKRLGEYRTNLEAERCASTIKTVIENALDTERNQIVELIEIVARKMAPPIRRYLAEGAEVLAKDSNSMDQLMMYLESSLATLYDTLNEINFQRILDGIWSELSIIMYDLIQSNLDKRRPPAFFQNLNNTLQTMMDCFKMGNLQTSDIKILSSIQSRLRLYSLETSDLIHQYYLERLENQKSQESSPYGQLTITAQLTDTGLLLNILNARNLLPMDSNGSVDSFVKASFMPTSRFNDVPTVKTNVHNKSCFPLYDQEFRINLSDHQRSEKNSLIVFSIKDKDLFGMSSQYIAESYISFADLEATPPGEQIMMNLSRPEYTDSESLRALEYRLGDKQAKDFLKKLKNRSFS.

Residues 54–84 (VLKSSLAPLEENGSGGEEDSDESPDGTLQLS) are disordered. The C2 1 domain occupies 162 to 288 (ATHEEIYEAA…MKEIAVTASS (127 aa)). Ca(2+)-binding residues include D195, D201, D252, F253, and D254. Residues 637 to 755 (FEVYLILKRY…RCCIFYAQQM (119 aa)) enclose the MHD1 domain. The MHD2 domain occupies 869–975 (SNSMDQLMMY…LETSDLIHQY (107 aa)). In terms of domain architecture, C2 2 spans 990 to 1114 (PYGQLTITAQ…EATPPGEQIM (125 aa)). Ca(2+) is bound by residues D1019, D1025, D1083, and D1085.

Belongs to the unc-13 family. Interacts with Cam. Ca(2+) is required as a cofactor.

The protein resides in the cytoplasm. The protein localises to the cytoskeleton. Its subcellular location is the cell projection. It localises to the filopodium. It is found in the late endosome. The protein resides in the lysosome. Its function is as follows. Essential for tracheal development in embryos. Functions with the GTPase Rab39 and downstream of dnd, to regulate lumen fusion between previously separate tracheal branches (anastomosis). Essential component of secretory lysosome-related organelles (SLs) that are present in the tracheal fusion tip cells (FCs). Mediates intracellular fusion of the extending tracheal stalk cell lumen in the FCs by recruiting the SNARE complex component Syx1A to the SLs, this may then enable the SLs to interact with complementary SNAREs (such as Syb) present in the apical membrane of the FC-FC interface and the membranes of the separate tracheal stalk cells. May also function in the maturation and exocytosis of the SLs. The sequence is that of Protein unc-13 homolog 4B from Drosophila melanogaster (Fruit fly).